Here is a 365-residue protein sequence, read N- to C-terminus: DNA replication and repair protein RecF (365 aa).

30 to 37 (GANGQGKT) lines the ATP pocket.

It belongs to the RecF family.

It is found in the cytoplasm. In terms of biological role, the RecF protein is involved in DNA metabolism; it is required for DNA replication and normal SOS inducibility. RecF binds preferentially to single-stranded, linear DNA. It also seems to bind ATP. In Geobacter metallireducens (strain ATCC 53774 / DSM 7210 / GS-15), this protein is DNA replication and repair protein RecF.